The primary structure comprises 579 residues: Multidrug resistance-like ATP-binding protein MdlA (579 aa).

The region spanning Tyr-18–Arg-303 is the ABC transmembrane type-1 domain. Helical transmembrane passes span Ile-20 to Gly-40, Lys-53 to Leu-73, Gly-134 to Thr-154, Gln-155 to Ile-175, Ile-247 to Ile-267, and Ile-281 to Ile-301. Residues Val-338–Leu-572 enclose the ABC transporter domain. Gly-370 to Ser-377 contributes to the ATP binding site.

This sequence belongs to the ABC transporter superfamily. Drug exporter-2 (TC 3.A.1.117) family.

It is found in the cell membrane. The enzyme catalyses ATP + H2O + xenobioticSide 1 = ADP + phosphate + xenobioticSide 2.. This Buchnera aphidicola subsp. Baizongia pistaciae (strain Bp) protein is Multidrug resistance-like ATP-binding protein MdlA (mdlA).